The following is a 921-amino-acid chain: TRPM8 channel-associated factor 1 (921 aa).

In terms of domain architecture, Peptidase M60 spans 542–841 (YCWMSTGLYI…TYLQLQEAFG (300 aa)).

The protein belongs to the TCAF family. Interacts with TRPM8 (via N-terminus and C-terminus domains); the interaction inhibits TRPM8 channel activity. Interacts with TRPV6. In terms of tissue distribution, isoform 2 is expressed in the prostate and strongly expressed in cancerous prostate samples.

Its subcellular location is the cell membrane. Its function is as follows. Positively regulates the plasma membrane cation channel TRPM8 activity. Involved in the recruitment of TRPM8 to the cell surface. Promotes prostate cancer cell migration inhibition in a TRPM8-dependent manner. This chain is TRPM8 channel-associated factor 1, found in Homo sapiens (Human).